A 170-amino-acid chain; its full sequence is ATP synthase subunit b (170 aa).

A helical membrane pass occupies residues 15-37 (FNLFETNILNWAVVVFGLYKFLP).

The protein belongs to the ATPase B chain family. In terms of assembly, F-type ATPases have 2 components, F(1) - the catalytic core - and F(0) - the membrane proton channel. F(1) has five subunits: alpha(3), beta(3), gamma(1), delta(1), epsilon(1). F(0) has four main subunits: a(1), b(1), b'(1) and c(10-14). The alpha and beta chains form an alternating ring which encloses part of the gamma chain. F(1) is attached to F(0) by a central stalk formed by the gamma and epsilon chains, while a peripheral stalk is formed by the delta, b and b' chains.

It localises to the cellular thylakoid membrane. Its function is as follows. F(1)F(0) ATP synthase produces ATP from ADP in the presence of a proton or sodium gradient. F-type ATPases consist of two structural domains, F(1) containing the extramembraneous catalytic core and F(0) containing the membrane proton channel, linked together by a central stalk and a peripheral stalk. During catalysis, ATP synthesis in the catalytic domain of F(1) is coupled via a rotary mechanism of the central stalk subunits to proton translocation. Component of the F(0) channel, it forms part of the peripheral stalk, linking F(1) to F(0). This chain is ATP synthase subunit b, found in Prochlorococcus marinus (strain MIT 9312).